Here is a 478-residue protein sequence, read N- to C-terminus: ATP synthase subunit beta (478 aa).

163–170 serves as a coordination point for ATP; it reads GGAGVGKT.

Belongs to the ATPase alpha/beta chains family. F-type ATPases have 2 components, CF(1) - the catalytic core - and CF(0) - the membrane proton channel. CF(1) has five subunits: alpha(3), beta(3), gamma(1), delta(1), epsilon(1). CF(0) has three main subunits: a(1), b(2) and c(9-12). The alpha and beta chains form an alternating ring which encloses part of the gamma chain. CF(1) is attached to CF(0) by a central stalk formed by the gamma and epsilon chains, while a peripheral stalk is formed by the delta and b chains.

It localises to the cell inner membrane. The catalysed reaction is ATP + H2O + 4 H(+)(in) = ADP + phosphate + 5 H(+)(out). Produces ATP from ADP in the presence of a proton gradient across the membrane. The catalytic sites are hosted primarily by the beta subunits. The chain is ATP synthase subunit beta from Aquifex pyrophilus.